Reading from the N-terminus, the 161-residue chain is Nucleotide-binding protein mma_0840 (161 aa).

It belongs to the YajQ family.

Its function is as follows. Nucleotide-binding protein. The chain is Nucleotide-binding protein mma_0840 from Janthinobacterium sp. (strain Marseille) (Minibacterium massiliensis).